A 138-amino-acid chain; its full sequence is Nucleoside diphosphate kinase (138 aa).

ATP contacts are provided by Lys10, Phe58, Arg86, Thr92, Arg103, and Asn113. His116 (pros-phosphohistidine intermediate) is an active-site residue.

The protein belongs to the NDK family. In terms of assembly, homotetramer. It depends on Mg(2+) as a cofactor.

It is found in the cytoplasm. It carries out the reaction a 2'-deoxyribonucleoside 5'-diphosphate + ATP = a 2'-deoxyribonucleoside 5'-triphosphate + ADP. The enzyme catalyses a ribonucleoside 5'-diphosphate + ATP = a ribonucleoside 5'-triphosphate + ADP. Functionally, major role in the synthesis of nucleoside triphosphates other than ATP. The ATP gamma phosphate is transferred to the NDP beta phosphate via a ping-pong mechanism, using a phosphorylated active-site intermediate. This is Nucleoside diphosphate kinase from Actinobacillus pleuropneumoniae serotype 7 (strain AP76).